The following is a 261-amino-acid chain: Cytochrome c oxidase subunit 3 (261 aa).

The Mitochondrial matrix portion of the chain corresponds to 1–15 (MTHQTHAYHMVNPSP). Residues 16–34 (WPLTGALSALLMTSGLAMW) form a helical membrane-spanning segment. At 35-40 (FHFNST) the chain is on the mitochondrial intermembrane side. A helical transmembrane segment spans residues 41-66 (LLLALGLLTNILTMYQWWRDIIREST). The Mitochondrial matrix portion of the chain corresponds to 67-72 (FQGHHT). The helical transmembrane segment at 73–105 (SIVQKGLRYGMILFIISEVFFFSGFFWAFYHSS) threads the bilayer. At 106–128 (LAPTPELGGCWPPTGIHPLNPLE) the chain is on the mitochondrial intermembrane side. A helical membrane pass occupies residues 129–152 (VPLLNTSVLLASGVSITWAHHSLM). Residues 153–155 (EGN) are Mitochondrial matrix-facing. Residues 156-183 (RKNMLQGLFITISLGVYFTLLQASEYYE) traverse the membrane as a helical segment. At 184-190 (ASFTISD) the chain is on the mitochondrial intermembrane side. A helical membrane pass occupies residues 191-223 (GVYGSTFFVATGFHGLHVIIGSTFLIVCFLRQL). The Mitochondrial matrix portion of the chain corresponds to 224 to 232 (KFHFTSSHH). The chain crosses the membrane as a helical span at residues 233–256 (FGFEAAAWYWHFVDVVWLFLYVSI). At 257 to 261 (YWWGS) the chain is on the mitochondrial intermembrane side.

Belongs to the cytochrome c oxidase subunit 3 family. In terms of assembly, component of the cytochrome c oxidase (complex IV, CIV), a multisubunit enzyme composed of 14 subunits. The complex is composed of a catalytic core of 3 subunits MT-CO1, MT-CO2 and MT-CO3, encoded in the mitochondrial DNA, and 11 supernumerary subunits COX4I, COX5A, COX5B, COX6A, COX6B, COX6C, COX7A, COX7B, COX7C, COX8 and NDUFA4, which are encoded in the nuclear genome. The complex exists as a monomer or a dimer and forms supercomplexes (SCs) in the inner mitochondrial membrane with NADH-ubiquinone oxidoreductase (complex I, CI) and ubiquinol-cytochrome c oxidoreductase (cytochrome b-c1 complex, complex III, CIII), resulting in different assemblies (supercomplex SCI(1)III(2)IV(1) and megacomplex MCI(2)III(2)IV(2)).

It localises to the mitochondrion inner membrane. It catalyses the reaction 4 Fe(II)-[cytochrome c] + O2 + 8 H(+)(in) = 4 Fe(III)-[cytochrome c] + 2 H2O + 4 H(+)(out). Functionally, component of the cytochrome c oxidase, the last enzyme in the mitochondrial electron transport chain which drives oxidative phosphorylation. The respiratory chain contains 3 multisubunit complexes succinate dehydrogenase (complex II, CII), ubiquinol-cytochrome c oxidoreductase (cytochrome b-c1 complex, complex III, CIII) and cytochrome c oxidase (complex IV, CIV), that cooperate to transfer electrons derived from NADH and succinate to molecular oxygen, creating an electrochemical gradient over the inner membrane that drives transmembrane transport and the ATP synthase. Cytochrome c oxidase is the component of the respiratory chain that catalyzes the reduction of oxygen to water. Electrons originating from reduced cytochrome c in the intermembrane space (IMS) are transferred via the dinuclear copper A center (CU(A)) of subunit 2 and heme A of subunit 1 to the active site in subunit 1, a binuclear center (BNC) formed by heme A3 and copper B (CU(B)). The BNC reduces molecular oxygen to 2 water molecules using 4 electrons from cytochrome c in the IMS and 4 protons from the mitochondrial matrix. In Equus asinus (Donkey), this protein is Cytochrome c oxidase subunit 3 (MT-CO3).